The sequence spans 529 residues: MQQRRPVRRALLSVSDKAGIIEFAQALSARGVELLSTGGTARLLAEKGLPVTEVSDYTGFPEMMDGRVKTLHPKIHGGILGRRGQDDAIMEQHHIAPIDMVVVNLYPFAETVAREGCSLEDAVENIDIGGPTMVRSAAKNHKDVAIVVKSSDYDAIIKEMDANEGSLTLDTRFDLAIKAFEHTAAYDSMIANYFGSMVPAYHGESKEAAGRFPRTLNLNFIKKQDMRYGENSHQQAAFYIEENVKEASVATAQQVQGKALSYNNIADTDAALECVKEFNEPACVIVKHANPCGVAVSTTILDAYDRAYKTDPTSAFGGIIAFNRELDAETAQAIISRQFVEVIIAPSATEEALKITAAKQNVRVLTCGQWAQRVPGLDFKRVNGGLLVQDRDLGMVSEAELRVVSKRQPTEQELRDALFCWKVAKFVKSNAIVYAKENMTIGIGAGQMSRVYSAKIAGIKAADEGLEVKGSAMASDAFFPFRDGIDAAAAVGVSCVIQPGGSIRDDEVIAAADEHGIAMIFTDMRHFRH.

In terms of domain architecture, MGS-like spans 1–148 (MQQRRPVRRA…KNHKDVAIVV (148 aa)).

It belongs to the PurH family.

The catalysed reaction is (6R)-10-formyltetrahydrofolate + 5-amino-1-(5-phospho-beta-D-ribosyl)imidazole-4-carboxamide = 5-formamido-1-(5-phospho-D-ribosyl)imidazole-4-carboxamide + (6S)-5,6,7,8-tetrahydrofolate. It catalyses the reaction IMP + H2O = 5-formamido-1-(5-phospho-D-ribosyl)imidazole-4-carboxamide. It functions in the pathway purine metabolism; IMP biosynthesis via de novo pathway; 5-formamido-1-(5-phospho-D-ribosyl)imidazole-4-carboxamide from 5-amino-1-(5-phospho-D-ribosyl)imidazole-4-carboxamide (10-formyl THF route): step 1/1. The protein operates within purine metabolism; IMP biosynthesis via de novo pathway; IMP from 5-formamido-1-(5-phospho-D-ribosyl)imidazole-4-carboxamide: step 1/1. This chain is Bifunctional purine biosynthesis protein PurH, found in Salmonella heidelberg (strain SL476).